The following is a 259-amino-acid chain: Ribosomal RNA small subunit methyltransferase J (259 aa).

S-adenosyl-L-methionine is bound by residues 101–102 (RD), 117–118 (ER), 153–154 (SS), and aspartate 176.

Belongs to the methyltransferase superfamily. RsmJ family.

Its subcellular location is the cytoplasm. It catalyses the reaction guanosine(1516) in 16S rRNA + S-adenosyl-L-methionine = N(2)-methylguanosine(1516) in 16S rRNA + S-adenosyl-L-homocysteine + H(+). Its function is as follows. Specifically methylates the guanosine in position 1516 of 16S rRNA. This Vibrio campbellii (strain ATCC BAA-1116) protein is Ribosomal RNA small subunit methyltransferase J.